The sequence spans 71 residues: Ribosome modulation factor (71 aa).

Belongs to the ribosome modulation factor family.

The protein localises to the cytoplasm. Its function is as follows. During stationary phase, converts 70S ribosomes to an inactive dimeric form (100S ribosomes). The chain is Ribosome modulation factor from Pseudomonas savastanoi pv. phaseolicola (strain 1448A / Race 6) (Pseudomonas syringae pv. phaseolicola (strain 1448A / Race 6)).